Here is a 355-residue protein sequence, read N- to C-terminus: Probable cinnamyl alcohol dehydrogenase (355 aa).

Cysteine 47 provides a ligand contact to Zn(2+). Serine 49 is a binding site for NADP(+). Zn(2+)-binding residues include histidine 69, glutamate 70, cysteine 100, cysteine 103, cysteine 106, cysteine 114, and cysteine 162. NADP(+) contacts are provided by residues threonine 166, 187-192, 210-215, threonine 250, glycine 274, and 297-299; these read GLGGVG, SSSDKK, and SFI.

The protein belongs to the zinc-containing alcohol dehydrogenase family. Homodimer. Zn(2+) serves as cofactor.

The enzyme catalyses (E)-cinnamyl alcohol + NADP(+) = (E)-cinnamaldehyde + NADPH + H(+). It carries out the reaction (E)-coniferol + NADP(+) = (E)-coniferaldehyde + NADPH + H(+). It catalyses the reaction (E)-sinapyl alcohol + NADP(+) = (E)-sinapaldehyde + NADPH + H(+). The catalysed reaction is (E)-4-coumaroyl alcohol + NADP(+) = (E)-4-coumaraldehyde + NADPH + H(+). The enzyme catalyses (E)-caffeyl alcohol + NADP(+) = (E)-caffeyl aldehyde + NADPH + H(+). It functions in the pathway aromatic compound metabolism; phenylpropanoid biosynthesis. Involved in lignin biosynthesis. Catalyzes the final step specific for the production of lignin monomers. Catalyzes the NADPH-dependent reduction of coniferaldehyde, 5-hydroxyconiferaldehyde, sinapaldehyde, 4-coumaraldehyde and caffeyl aldehyde to their respective alcohols. The sequence is that of Probable cinnamyl alcohol dehydrogenase (CAD1) from Eucalyptus botryoides (Southern mahogany).